The chain runs to 998 residues: SEC23-interacting protein (998 aa).

Positions 1–363 (MADRKANGGG…YTEEFSEKLE (363 aa)) are interaction with SEC23A. Residues 50–246 (LPGEDSTDVG…AQQQVPARPA (197 aa)) form a disordered region. A compositionally biased stretch (acidic residues) spans 54 to 63 (DSTDVGEEDS). The span at 65 to 78 (LGQTSTHTSTPQTF) shows a compositional bias: polar residues. Positions 79–88 (SYFSQVSSSS) are enriched in low complexity. Polar residues-rich tracts occupy residues 94-108 (IGQSPLTTSAMSAGQ), 143-158 (PPSQMGTSTYSPSQPS), and 232-241 (AMQSPAQQQV). Phosphoserine is present on serine 600. The SAM domain occupies 640 to 703 (EEPLTLHGTL…NFVKLKAAKL (64 aa)). The interval 720 to 742 (TKGQDESAPKTKEMASPSSESNE) is disordered. The span at 722-732 (GQDESAPKTKE) shows a compositional bias: basic and acidic residues. A phosphoserine mark is found at serine 735, serine 748, and serine 924. Residues 777–987 (LDFEPEIFFA…ALLLLKEIYR (211 aa)) enclose the DDHD domain.

This sequence belongs to the PA-PLA1 family. In terms of assembly, interacts with SEC23A.

It is found in the cytoplasmic vesicle. The protein resides in the COPII-coated vesicle membrane. Its subcellular location is the endoplasmic reticulum. Its function is as follows. Plays a role in the organization of endoplasmic reticulum exit sites. Specifically binds to phosphatidylinositol 3-phosphate (PI(3)P), phosphatidylinositol 4-phosphate (PI(4)P) and phosphatidylinositol 5-phosphate (PI(5)P). In Mus musculus (Mouse), this protein is SEC23-interacting protein (Sec23ip).